Reading from the N-terminus, the 205-residue chain is V-type ATP synthase subunit E (205 aa).

This sequence belongs to the V-ATPase E subunit family.

Its function is as follows. Produces ATP from ADP in the presence of a proton gradient across the membrane. The protein is V-type ATP synthase subunit E of Treponema denticola (strain ATCC 35405 / DSM 14222 / CIP 103919 / JCM 8153 / KCTC 15104).